The primary structure comprises 38 residues: Spheniscin-2 (38 aa).

3 disulfide bridges follow: cysteine 5-cysteine 33, cysteine 12-cysteine 27, and cysteine 17-cysteine 34.

In terms of assembly, monomer. In terms of tissue distribution, secreted into the stomach cavity.

The protein localises to the secreted. In terms of biological role, has antifungal activity and antibacterial activity against Gram-positive and Gram-negative bacteria. Involved in the process of food preservation in the stomach during the incubation fast. May also be present during infection. This is Spheniscin-2 from Aptenodytes patagonicus (King penguin).